The sequence spans 256 residues: Thiazole synthase (256 aa).

Lys91 serves as the catalytic Schiff-base intermediate with DXP. 1-deoxy-D-xylulose 5-phosphate is bound by residues Gly152, 179–180 (AG), and 201–202 (NT).

This sequence belongs to the ThiG family. In terms of assembly, homotetramer. Forms heterodimers with either ThiH or ThiS.

It is found in the cytoplasm. The enzyme catalyses [ThiS sulfur-carrier protein]-C-terminal-Gly-aminoethanethioate + 2-iminoacetate + 1-deoxy-D-xylulose 5-phosphate = [ThiS sulfur-carrier protein]-C-terminal Gly-Gly + 2-[(2R,5Z)-2-carboxy-4-methylthiazol-5(2H)-ylidene]ethyl phosphate + 2 H2O + H(+). The protein operates within cofactor biosynthesis; thiamine diphosphate biosynthesis. Its function is as follows. Catalyzes the rearrangement of 1-deoxy-D-xylulose 5-phosphate (DXP) to produce the thiazole phosphate moiety of thiamine. Sulfur is provided by the thiocarboxylate moiety of the carrier protein ThiS. In vitro, sulfur can be provided by H(2)S. The protein is Thiazole synthase of Erwinia tasmaniensis (strain DSM 17950 / CFBP 7177 / CIP 109463 / NCPPB 4357 / Et1/99).